The sequence spans 116 residues: MLSCRLQCALAALSIVLALGGVTGAPSDPRLRQFLQKSLAAAAGKQELAKYFLAELLSEPNQTENDALEPEDLSQAAEQDEMRLELQRSANSNPAMAPRERKAGCKNFFWKTFTSC.

A signal peptide spans 1–24; sequence MLSCRLQCALAALSIVLALGGVTG. Residues 25–88 constitute a propeptide that is removed on maturation; that stretch reads APSDPRLRQF…QDEMRLELQR (64 aa). Alanine amide is present on A43. Positions 62-99 are disordered; that stretch reads QTENDALEPEDLSQAAEQDEMRLELQRSANSNPAMAPR. A disulfide bridge connects residues C105 and C116.

It belongs to the somatostatin family. C-terminal amidation of the neuronostatin peptide is required for its biological activity, including for the regulation of mean arterial pressure. As to expression, expressed in the pancreas and the spleen (at protein level).

It localises to the secreted. Inhibits the secretion of pituitary hormones, including that of growth hormone/somatotropin (GH1), PRL, ACTH, luteinizing hormone (LH) and TSH. Also impairs ghrelin- and GnRH-stimulated secretion of GH1 and LH; the inhibition of ghrelin-stimulated secretion of GH1 can be further increased by neuronostatin. Functionally, may enhance low-glucose-induced glucagon release by pancreatic alpha cells. This effect may be mediated by binding to GPR107 and PKA activation. May regulate cardiac contractile function. May compromise cardiomyocyte viability. In the central nervous system, may impair memory retention and may affect hippocampal excitability. May also have anxiolytic and anorexigenic effects. May play a role in arterial pressure regulation. May inhibit basal, but not ghrelin- or GnRH-stimulated secretion of GH1 or LH, but does not affect the release of other pituitary hormones, including PRL, ACTH, FSH or TSH. Potentiates inhibitory action of somatostatin on ghrelin-stimulated secretion of GH1, but not that on GnRH-stimulated secretion of LH. In Sus scrofa (Pig), this protein is Somatostatin (SST).